The following is a 273-amino-acid chain: HTH-type transcriptional activator RhaS (273 aa).

The HTH araC/xylS-type domain occupies 174–272; the sequence is YQLLDWLQNN…SQSPRDLRSQ (99 aa). 2 DNA-binding regions (H-T-H motif) span residues 191 to 212 and 239 to 262; these read PELA…KNKT and VTDI…KREF.

Binds DNA as a dimer.

It localises to the cytoplasm. Functionally, activates expression of the rhaBAD and rhaT operons. This is HTH-type transcriptional activator RhaS from Yersinia pseudotuberculosis serotype I (strain IP32953).